We begin with the raw amino-acid sequence, 361 residues long: MNLLTTKIDLDAIAHNTRVLKQMAGPAKLMAVVKANAYNHGVEKVAPVIAAHGADAFGVATLAEAMQLRDIGISQEVLCWIWTPEQDFRAAIDRNIDLAVISPAHAKALIETDAEHIRVSIKIDSGLHRSGVDEQEWEGVFSALAAAPHIEVTGMFTHLACADEPENPETDRQIIAFRRALALARKHGLECPVNHVCNSPAFLTRSDLHMEMVRPGLAFYGLEPVAGLEHGLKPAMTWEAKVSVVKQIEAGQGTSYGLTWRAEDRGFVAVVPAGYADGMPRHAQGKFSVTIDGLDYPQVGRVCMDQFVISLGDNPHGVEAGAKAVIFGENGHDATDFAERLDTINYEVVCRPTGRTVRAYV.

The Proton acceptor; specific for D-alanine role is filled by Lys34. Lys34 carries the N6-(pyridoxal phosphate)lysine modification. Substrate is bound at residue Arg129. Tyr256 functions as the Proton acceptor; specific for L-alanine in the catalytic mechanism. Residue Met304 participates in substrate binding.

The protein belongs to the alanine racemase family. In terms of assembly, homodimer. Pyridoxal 5'-phosphate is required as a cofactor.

The catalysed reaction is L-alanine = D-alanine. It functions in the pathway amino-acid biosynthesis; D-alanine biosynthesis; D-alanine from L-alanine: step 1/1. Functionally, catalyzes the interconversion of L-alanine and D-alanine. May also act on other amino acids. This Corynebacterium glutamicum (strain ATCC 13032 / DSM 20300 / JCM 1318 / BCRC 11384 / CCUG 27702 / LMG 3730 / NBRC 12168 / NCIMB 10025 / NRRL B-2784 / 534) protein is Alanine racemase (alr).